The chain runs to 423 residues: Glycine-rich protein 1 (423 aa).

The N-terminal stretch at 1–20 is a signal peptide; that stretch reads MKKICLTFVFLLSLFPIYSS. 4 disordered regions span residues 28–47, 78–133, 159–219, and 236–288; these read TIESGSSKSSGSSVGNAGPA, DDDN…SKKN, KGGS…GAGA, and GASA…ASAG. Over residues 31-42 the composition is skewed to low complexity; that stretch reads SGSSKSSGSSVG. 2 stretches are compositionally biased toward basic and acidic residues: residues 81-93 and 102-111; these read NKDKKKNDEDGKT and QNGDDVKSDN. Gly residues predominate over residues 159–172; that stretch reads KGGSANNGGEGGAT. Over residues 173 to 183 the composition is skewed to low complexity; the sequence is SAGSAGATSGA. 2 stretches are compositionally biased toward gly residues: residues 205–219 and 236–247; these read GAGGESGGAGAGAGA and GASAGAGAGGAQ. Residues 248 to 284 are compositionally biased toward low complexity; sequence GDAEAASAGSTAGSTSSGGAAASGASSGAGSSDSGQG.

Nacreous layer of shell (at protein level).

The protein resides in the secreted. The sequence is that of Glycine-rich protein 1 from Pinctada maxima (Silver-lipped pearl oyster).